A 1017-amino-acid polypeptide reads, in one-letter code: Anaphase-promoting complex subunit 5 (1017 aa).

TPR repeat units follow at residues 30–63, 182–214, 252–286, 337–370, and 508–541; these read KQSLSHLLIRHIKENNYQDTVKEVSLYDFIEKEL, DMSMDQEQQQQQQEDYNEISNYENKIKFLSPLD, VKRVHLISLLFNIGYQDYDQSLEDLHRYFDYVNGQ, PYAVLNLVRLHYHFGHYEESYLALREAIRIAQER, and NNNNNNNNNNNSSNSNNNGGVNMFGKSFHLWNDI. Residues 451 to 525 are compositionally biased toward low complexity; sequence INSNNYNSNN…NNNSSNSNNN (75 aa). 2 disordered regions span residues 451–527 and 617–636; these read INSN…NNGG and NNNNNNNNNNNQIKQQQQQN. TPR repeat units follow at residues 642 to 675, 756 to 790, 838 to 871, 876 to 908, and 931 to 964; these read LLSFCKLALLYSKKSKYNEAIQILIKCFSIYKTQ, VICYQKIIKYYCNVRGMYEKSMNLIVKGIQISRDF, ADSNIALIKIHLSTDRLDKAITLIKETLPMVLSD, SQLYLLWAKSLISTSTKQSIDYLNRSEQLFLQL, and KEIYYLKSIIYNDLGDIENRNLYAKKFKSILVPS.

This sequence belongs to the APC5 family. In terms of assembly, the APC/C is composed of at least 13 subunits that stay tightly associated throughout the cell cycle: anapc1, anapc2, anapc3, anapc4, anapc5, anapc6, anapc7, anapc8, anapc10, anapc11, cdc20, cdc26 and cdh1.

The protein localises to the nucleus. Its pathway is protein modification; protein ubiquitination. Its function is as follows. Component of the anaphase promoting complex/cyclosome (APC/C), a cell cycle-regulated E3 ubiquitin-protein ligase complex that controls progression through mitosis and the G1 phase of the cell cycle. The polypeptide is Anaphase-promoting complex subunit 5 (anapc5) (Dictyostelium discoideum (Social amoeba)).